The primary structure comprises 153 residues: Penitrem biosynthesis cluster 1 protein I (153 aa).

It participates in secondary metabolite biosynthesis. In terms of biological role, part of the gene cluster that mediates the biosynthesis of the indole diterpenes penitrems. The geranylgeranyl diphosphate (GGPP) synthase ptmG catalyzes the first step in penitrem biosynthesis via conversion of farnesyl pyrophosphate and isopentyl pyrophosphate into geranylgeranyl pyrophosphate (GGPP). Condensation of indole-3-glycerol phosphate with GGPP by the prenyl transferase ptmC then forms 3-geranylgeranylindole (3-GGI). Epoxidation by the FAD-dependent monooxygenase ptmM leads to a epoxidized-GGI that is substrate of the terpene cyclase ptmB for cyclization to yield paspaline. Paspaline is subsequently converted to 13-desoxypaxilline by the cytochrome P450 monooxygenase ptmP, the latter being then converted to paxilline by the cytochrome P450 monooxygenase ptmQ. Paxilline is converted to beta-paxitriol via C-10 ketoreduction by the short-chain dehydrogenase ptmH which can be monoprenylated at the C-20 by the indole diterpene prenyltransferase ptmD. A two-step elimination (acetylation and elimination) process performed by the O-acetyltransferase ptmV and ptmI leads to the production of the prenylated form of penijanthine. The FAD-linked oxidoreductase ptmO then converts the prenylated form of penijanthine into PC-M5 which is in turn transformed into PC-M4 by the aromatic dimethylallyltransferase ptmE. Five sequential oxidative transformations performed by the cytochrome P450 monooxygenases ptmK, ptmU, ptmL, ptmN and ptmJ yield the various penitrem compounds. PtmK, ptmU and ptmM are involved in the formation of the key bicyclic ring of penitrem C via the formation of the intermediates secopenitrem D and penitrem D. PtmL catalyzes the epoxidation of penitrem D and C to yield penitrem B and F, respectively. PtmJ catalyzes the last benzylic hydroxylation to convert penitrem B to prenitrem E and penitrem F to penitrem A. In Penicillium ochrochloron, this protein is Penitrem biosynthesis cluster 1 protein I.